The sequence spans 157 residues: 2-C-methyl-D-erythritol 2,4-cyclodiphosphate synthase (157 aa).

The a divalent metal cation site is built by D8 and H10. Residues D8–H10 and H34–S35 each bind 4-CDP-2-C-methyl-D-erythritol 2-phosphate. H42 lines the a divalent metal cation pocket. 4-CDP-2-C-methyl-D-erythritol 2-phosphate is bound by residues D56–G58, F61–D65, A100–A106, T132–E135, F139, and R142.

The protein belongs to the IspF family. As to quaternary structure, homotrimer. It depends on a divalent metal cation as a cofactor.

It catalyses the reaction 4-CDP-2-C-methyl-D-erythritol 2-phosphate = 2-C-methyl-D-erythritol 2,4-cyclic diphosphate + CMP. Its pathway is isoprenoid biosynthesis; isopentenyl diphosphate biosynthesis via DXP pathway; isopentenyl diphosphate from 1-deoxy-D-xylulose 5-phosphate: step 4/6. Its function is as follows. Involved in the biosynthesis of isopentenyl diphosphate (IPP) and dimethylallyl diphosphate (DMAPP), two major building blocks of isoprenoid compounds. Catalyzes the conversion of 4-diphosphocytidyl-2-C-methyl-D-erythritol 2-phosphate (CDP-ME2P) to 2-C-methyl-D-erythritol 2,4-cyclodiphosphate (ME-CPP) with a corresponding release of cytidine 5-monophosphate (CMP). This is 2-C-methyl-D-erythritol 2,4-cyclodiphosphate synthase from Pseudomonas fluorescens (strain Pf0-1).